Here is a 60-residue protein sequence, read N- to C-terminus: Short neurotoxin 1 (60 aa).

4 disulfides stabilise this stretch: Cys-3-Cys-22, Cys-17-Cys-39, Cys-41-Cys-52, and Cys-53-Cys-58.

It belongs to the three-finger toxin family. Short-chain subfamily. Type I alpha-neurotoxin sub-subfamily. As to expression, expressed by the venom gland.

The protein localises to the secreted. In terms of biological role, binds to muscle nicotinic acetylcholine receptor (nAChR) and inhibit acetylcholine from binding to the receptor, thereby impairing neuromuscular transmission. The protein is Short neurotoxin 1 of Hydrophis cyanocinctus (Asian annulated sea snake).